Reading from the N-terminus, the 161-residue chain is Disulfide bond formation protein B (161 aa).

Topologically, residues 1 to 8 are cytoplasmic; sequence MQANSRTY. A helical transmembrane segment spans residues 9–25; it reads FLLIAIVSFAMVGAALY. Residues 26-43 are Periplasmic-facing; the sequence is MQYAENLQPCPLCIMQRF. Residues C35 and C38 are joined by a disulfide bond. A helical membrane pass occupies residues 44–58; it reads AFIGIGIFSLLAVIA. Residues 59-63 lie on the Cytoplasmic side of the membrane; sequence QNTRT. A helical transmembrane segment spans residues 64 to 81; the sequence is LWQGLGMLSGVGGIAVAG. Residues 82–136 are Periplasmic-facing; the sequence is YQVALLMNPKASCGIDPLENWVNSLPTAKLLPQVFYSDGLCTAPTPPILGLSIPA. A disulfide bridge links C94 with C122. The chain crosses the membrane as a helical span at residues 137–155; it reads WSLIWLLILTLTLAVGLIR. The Cytoplasmic segment spans residues 156–161; sequence REKHFR.

This sequence belongs to the DsbB family.

Its subcellular location is the cell inner membrane. Functionally, required for disulfide bond formation in some periplasmic proteins. Acts by oxidizing the DsbA protein. This chain is Disulfide bond formation protein B, found in Cupriavidus metallidurans (strain ATCC 43123 / DSM 2839 / NBRC 102507 / CH34) (Ralstonia metallidurans).